A 445-amino-acid chain; its full sequence is D-serine transporter DsdX (445 aa).

A run of 12 helical transmembrane segments spans residues 5-25, 29-49, 57-77, 106-126, 140-160, 178-198, 224-244, 265-285, 302-322, 343-363, 385-405, and 425-445; these read IWVV…IVKF, PFLA…MGPL, SGIG…TILG, VLVG…VLLI, LLKL…VVPP, VIVY…PLFL, TLPS…LMLV, IGNP…VLGI, FGSI…NAIL, ILLA…ATVA, IIAI…DSLF, and TATF…SFII.

Belongs to the GntP permease family.

Its subcellular location is the cell inner membrane. Its activity is regulated as follows. Uptake of D-serine is inhibited by carbonyl cyanide m-chlorophenylhydrazone (CCCP), and at high concentrations of D-threonine, stimulated by D-cycloserine and not affected by D-alanine or glycine. Protein that allows transport of D-serine across the inner membrane, does not transport D-alanine nor probably glycine. Is probably a H(+) symporter, as CCCP inhibits transport. Transports D-serine more efficiently than CycA. This is D-serine transporter DsdX (dsdX) from Escherichia coli O6:H1 (strain CFT073 / ATCC 700928 / UPEC).